The following is a 775-amino-acid chain: Homeobox protein SIX4 (775 aa).

Residues 1 to 10 (MSSSSPTGQI) are compositionally biased toward polar residues. Disordered regions lie at residues 1 to 76 (MSSS…AGAA) and 263 to 313 (WFKN…DGVT). S2 is subject to N-acetylserine. A compositionally biased stretch (low complexity) spans 54 to 63 (EPGDAAAASR). Positions 216–275 (GEETVYCFKEKSRNALKELYKQNRYPSPAEKRHLAKITGLSLTQVSNWFKNRRQRDRNPS) form a DNA-binding region, homeobox. Basic and acidic residues-rich tracts occupy residues 271-283 (DRNPSETQSKSES) and 292-301 (ESSKGHEDLS). A transactivation domain region spans residues 582-775 (AQVNASLSSE…VQLDEDMQDL (194 aa)). S634 carries the post-translational modification Phosphoserine.

Belongs to the SIX/Sine oculis homeobox family. In terms of assembly, interacts with EYA3; acts cooperatively with EYA3 to transactivate target genes through interaction and nuclear translocation of EYA3 protein. Mainly expressed in the skeletal muscle (isoform 1 and isoform 2 but not isoform 3), and weakly in the heart. Also found in the retina and the distal tube of kidney. Expressed in skeletal muscle, nasal epithelium, cochlea, parathyroid and salivary gland. Expressed in muscle satellite cells of normal and regenerating muscles.

Its subcellular location is the nucleus. The protein resides in the cytoplasm. Functionally, transcriptional regulator which can act as both a transcriptional repressor and activator by binding a DNA sequence on these target genes and is involved in processes like cell differentiation, cell migration and cell survival. Transactivates gene expression by binding a 5'-[CAT]A[CT][CT][CTG]GA[GAT]-3' motif present in the Trex site and from a 5'-TCA[AG][AG]TTNC-3' motif present in the MEF3 site of the muscle-specific genes enhancer. Acts cooperatively with EYA proteins to transactivate their target genes through interaction and nuclear translocation of EYA protein. Acts synergistically with SIX1 to regulate target genes involved in formation of various organs, including muscle, kidney, gonad, ganglia, olfactory epithelium and cranial skeleton. Plays a role in several important steps of muscle development. Controls the genesis of hypaxial myogenic progenitors in the dermomyotome by transactivating PAX3 and the delamination and migration of the hypaxial precursors from the ventral lip to the limb buds through the transactivation of PAX3, MET and LBX1. Controls myoblast determination by transactivating MYF5, MYOD1 and MYF6. Controls somitic differentiation in myocyte through MYOG transactivation. Plays a role in synaptogenesis and sarcomere organization by participating in myofiber specialization during embryogenesis by activating fast muscle program in the primary myotome resulting in an up-regulation of fast muscle genes, including ATP2A1, MYL1 and TNNT3. Simultaneously, is also able to activate inhibitors of slow muscle genes, such as SOX6, HRASLS, and HDAC4, thereby restricting the activation of the slow muscle genes. During muscle regeneration, negatively regulates differentiation of muscle satellite cells through down-regulation of MYOG expression. During kidney development regulates the early stages of metanephros development and ureteric bud formation through regulation of GDNF, SALL1, PAX8 and PAX2 expression. Plays a role in gonad development by regulating both testis determination and size determination. In gonadal sex determination, transactivates ZFPM2 by binding a MEF3 consensus sequence, resulting in SRY up-regulation. In gonadal size determination, transactivates NR5A1 by binding a MEF3 consensus sequence resulting in gonadal precursor cell formation regulation. During olfactory development mediates the specification and patterning of olfactory placode through fibroblast growth factor and BMP4 signaling pathways and also regulates epithelial cell proliferation during placode formation. Promotes survival of sensory neurons during early trigeminal gangliogenesis. In the developing dorsal root ganglia, up-regulates SLC12A2 transcription. Regulates early thymus/parathyroid organogenesis through regulation of GCM2 and FOXN1 expression. Forms gustatory papillae during development of the tongue. Also plays a role during embryonic cranial skeleton morphogenesis. The polypeptide is Homeobox protein SIX4 (Six4) (Mus musculus (Mouse)).